A 530-amino-acid chain; its full sequence is Glucose-6-phosphate isomerase (530 aa).

Residue glutamate 356 is the Proton donor of the active site. Catalysis depends on residues histidine 387 and lysine 502.

It belongs to the GPI family.

The protein resides in the cytoplasm. The catalysed reaction is alpha-D-glucose 6-phosphate = beta-D-fructose 6-phosphate. It participates in carbohydrate biosynthesis; gluconeogenesis. It functions in the pathway carbohydrate degradation; glycolysis; D-glyceraldehyde 3-phosphate and glycerone phosphate from D-glucose: step 2/4. In terms of biological role, catalyzes the reversible isomerization of glucose-6-phosphate to fructose-6-phosphate. The protein is Glucose-6-phosphate isomerase of Borrelia garinii subsp. bavariensis (strain ATCC BAA-2496 / DSM 23469 / PBi) (Borreliella bavariensis).